The sequence spans 510 residues: ATP synthase subunit alpha (510 aa).

Position 169–176 (169–176) interacts with ATP; that stretch reads GDRQTGKT.

Belongs to the ATPase alpha/beta chains family. F-type ATPases have 2 components, CF(1) - the catalytic core - and CF(0) - the membrane proton channel. CF(1) has five subunits: alpha(3), beta(3), gamma(1), delta(1), epsilon(1). CF(0) has three main subunits: a(1), b(2) and c(9-12). The alpha and beta chains form an alternating ring which encloses part of the gamma chain. CF(1) is attached to CF(0) by a central stalk formed by the gamma and epsilon chains, while a peripheral stalk is formed by the delta and b chains.

Its subcellular location is the cell inner membrane. The catalysed reaction is ATP + H2O + 4 H(+)(in) = ADP + phosphate + 5 H(+)(out). Its function is as follows. Produces ATP from ADP in the presence of a proton gradient across the membrane. The alpha chain is a regulatory subunit. This chain is ATP synthase subunit alpha, found in Rickettsia rickettsii (strain Iowa).